Reading from the N-terminus, the 160-residue chain is Protein TCP17 (160 aa).

Its subcellular location is the cytoplasm. In Trypanosoma cruzi, this protein is Protein TCP17.